Here is a 454-residue protein sequence, read N- to C-terminus: MSLNVVILAAGKGTRMRSDLPKVLHPIAHKSMVQHVIDTANSLGSSAIQLVYGYGADKLQAALGEQALNWVLQAEQLGTGHAVAQANPNINDDDTVLILYGDVPLIQQSTLEALLAVRPTNGLAILTVNLPNPTGYGRIVREQGKVVGIIEQKDANAEQLAINEVNTGIMAVPGKQLKAWLNRLSNNNAQGEYYLTDIIAMANVDGVEITTSQPQSAIEVEGANNRVQLAQLERAYQARAAEKMMLEGANLRDPARIDIRGDVSVGMDVMIDVNVIFQGKVTLGNNVTIGAGAILIDCDIADNAEIKPYTIVEGAKLGQAASAGPFARLRPGAELKEDAHIGNFVEIKKSVLGKGSKAGHLAYLGDAQIGAGVNIGAGTITCNYDGANKFITTIEDGVFVGSDTQLVAPVTIGKNATLGAGSTITKDVAENELVITRVKQRHITGWQRPIKIKK.

The segment at 1–226 (MSLNVVILAA…AIEVEGANNR (226 aa)) is pyrophosphorylase. UDP-N-acetyl-alpha-D-glucosamine is bound by residues 8 to 11 (LAAG), Lys22, Gln73, 78 to 79 (GT), 100 to 102 (YGD), Gly137, Glu151, Asn166, and Asn224. Asp102 is a Mg(2+) binding site. Asn224 serves as a coordination point for Mg(2+). The interval 227–247 (VQLAQLERAYQARAAEKMMLE) is linker. The tract at residues 248–454 (GANLRDPARI…GWQRPIKIKK (207 aa)) is N-acetyltransferase. UDP-N-acetyl-alpha-D-glucosamine-binding residues include Arg330 and Lys348. His360 (proton acceptor) is an active-site residue. UDP-N-acetyl-alpha-D-glucosamine is bound by residues Tyr363 and Asn374. Acetyl-CoA is bound by residues Ala377, 383 to 384 (NY), Ser402, Ala420, and Arg437.

It in the N-terminal section; belongs to the N-acetylglucosamine-1-phosphate uridyltransferase family. The protein in the C-terminal section; belongs to the transferase hexapeptide repeat family. Homotrimer. Mg(2+) serves as cofactor.

Its subcellular location is the cytoplasm. It catalyses the reaction alpha-D-glucosamine 1-phosphate + acetyl-CoA = N-acetyl-alpha-D-glucosamine 1-phosphate + CoA + H(+). It carries out the reaction N-acetyl-alpha-D-glucosamine 1-phosphate + UTP + H(+) = UDP-N-acetyl-alpha-D-glucosamine + diphosphate. The protein operates within nucleotide-sugar biosynthesis; UDP-N-acetyl-alpha-D-glucosamine biosynthesis; N-acetyl-alpha-D-glucosamine 1-phosphate from alpha-D-glucosamine 6-phosphate (route II): step 2/2. It participates in nucleotide-sugar biosynthesis; UDP-N-acetyl-alpha-D-glucosamine biosynthesis; UDP-N-acetyl-alpha-D-glucosamine from N-acetyl-alpha-D-glucosamine 1-phosphate: step 1/1. Its pathway is bacterial outer membrane biogenesis; LPS lipid A biosynthesis. Functionally, catalyzes the last two sequential reactions in the de novo biosynthetic pathway for UDP-N-acetylglucosamine (UDP-GlcNAc). The C-terminal domain catalyzes the transfer of acetyl group from acetyl coenzyme A to glucosamine-1-phosphate (GlcN-1-P) to produce N-acetylglucosamine-1-phosphate (GlcNAc-1-P), which is converted into UDP-GlcNAc by the transfer of uridine 5-monophosphate (from uridine 5-triphosphate), a reaction catalyzed by the N-terminal domain. This is Bifunctional protein GlmU from Shewanella frigidimarina (strain NCIMB 400).